The primary structure comprises 244 residues: Mannose-binding protein C (244 aa).

Positions 1-18 (MSLFTSFLLLCVLTAVYA) are cleaved as a signal peptide. Residues 38 to 96 (GLNGFPGKDGHDGAKGEKGEPGQGLRGLQGPPGKVGPAGPPGNPGSKGATGPKGDRGES) form the Collagen-like domain. At Pro-43 the chain carries 4-hydroxyproline. The segment at 43 to 99 (PGKDGHDGAKGEKGEPGQGLRGLQGPPGKVGPAGPPGNPGSKGATGPKGDRGESVEF) is disordered. Basic and acidic residues predominate over residues 45 to 57 (KDGHDGAKGEKGE). 4 positions are modified to 4-hydroxyproline: Pro-58, Pro-69, Pro-78, and Pro-81. The span at 65-74 (LQGPPGKVGP) shows a compositional bias: low complexity. Residues 108-126 (IAALRSELRAMRKWVLLSM) are a coiled coil. One can recognise a C-type lectin domain in the interval 129-241 (NVGKKYFMSS…CSDSFLVVCE (113 aa)). Cystine bridges form between Cys-151/Cys-240 and Cys-218/Cys-232.

Oligomeric complex of 3 or more homotrimers. Interacts with MASP1 and MASP2. Interacts with MEP1A and MEP1B and may inhibit their catalytic activity.

The protein resides in the secreted. Functionally, calcium-dependent lectin involved in innate immune defense. Binds mannose, fucose and N-acetylglucosamine on different microorganisms and activates the lectin complement pathway. Binds to late apoptotic cells, as well as to apoptotic blebs and to necrotic cells, but not to early apoptotic cells, facilitating their uptake by macrophages. In Rattus norvegicus (Rat), this protein is Mannose-binding protein C (Mbl2).